A 295-amino-acid chain; its full sequence is Methionine aminopeptidase (295 aa).

Residue His62 coordinates substrate. Residues Asp82, Asp93, and His153 each coordinate a divalent metal cation. Residue His161 coordinates substrate. The a divalent metal cation site is built by Glu187 and Glu280.

It belongs to the peptidase M24A family. Methionine aminopeptidase archaeal type 2 subfamily. As to quaternary structure, monomer. Requires Co(2+) as cofactor. It depends on Zn(2+) as a cofactor. The cofactor is Mn(2+). Fe(2+) serves as cofactor.

It catalyses the reaction Release of N-terminal amino acids, preferentially methionine, from peptides and arylamides.. Its function is as follows. Removes the N-terminal methionine from nascent proteins. The N-terminal methionine is often cleaved when the second residue in the primary sequence is small and uncharged (Met-Ala-, Cys, Gly, Pro, Ser, Thr, or Val). This chain is Methionine aminopeptidase, found in Pyrococcus abyssi (strain GE5 / Orsay).